Here is a 341-residue protein sequence, read N- to C-terminus: UDP-3-O-(3-hydroxymyristoyl)glucosamine N-acyltransferase (341 aa).

The Proton acceptor role is filled by His-239.

It belongs to the transferase hexapeptide repeat family. LpxD subfamily. As to quaternary structure, homotrimer.

It carries out the reaction a UDP-3-O-[(3R)-3-hydroxyacyl]-alpha-D-glucosamine + a (3R)-hydroxyacyl-[ACP] = a UDP-2-N,3-O-bis[(3R)-3-hydroxyacyl]-alpha-D-glucosamine + holo-[ACP] + H(+). The catalysed reaction is UDP-3-O-[(3R)-3-hydroxytetradecanoyl]-alpha-D-glucosamine + (3R)-hydroxytetradecanoyl-[ACP] = UDP-2-N,3-O-bis[(3R)-3-hydroxytetradecanoyl]-alpha-D-glucosamine + holo-[ACP] + H(+). It functions in the pathway glycolipid biosynthesis; lipid IV(A) biosynthesis; lipid IV(A) from (3R)-3-hydroxytetradecanoyl-[acyl-carrier-protein] and UDP-N-acetyl-alpha-D-glucosamine: step 3/6. Functionally, catalyzes the N-acylation of UDP-3-O-(hydroxytetradecanoyl)glucosamine using 3-hydroxytetradecanoyl-ACP as the acyl donor. Is involved in the biosynthesis of lipid A, a phosphorylated glycolipid that anchors the lipopolysaccharide to the outer membrane of the cell. The chain is UDP-3-O-(3-hydroxymyristoyl)glucosamine N-acyltransferase from Salmonella paratyphi A (strain ATCC 9150 / SARB42).